The chain runs to 308 residues: Transaldolase (308 aa).

The active-site Schiff-base intermediate with substrate is Lys-125.

It belongs to the transaldolase family. Type 1 subfamily. As to quaternary structure, homodimer.

It localises to the cytoplasm. It carries out the reaction D-sedoheptulose 7-phosphate + D-glyceraldehyde 3-phosphate = D-erythrose 4-phosphate + beta-D-fructose 6-phosphate. It participates in carbohydrate degradation; pentose phosphate pathway; D-glyceraldehyde 3-phosphate and beta-D-fructose 6-phosphate from D-ribose 5-phosphate and D-xylulose 5-phosphate (non-oxidative stage): step 2/3. In terms of biological role, transaldolase is important for the balance of metabolites in the pentose-phosphate pathway. In Pseudomonas entomophila (strain L48), this protein is Transaldolase.